The sequence spans 164 residues: Transmembrane protein 234 (164 aa).

Helical transmembrane passes span 1-21, 82-102, and 112-132; these read MAASLGQVLALVLVAALWGGT, LAVPICNSLAIIFTLIVGKAL, and VAGMVLTVIGISLCITSSVPW.

Belongs to the TMEM234 family.

Its subcellular location is the membrane. This Homo sapiens (Human) protein is Transmembrane protein 234 (TMEM234).